Reading from the N-terminus, the 287-residue chain is PsbP domain-containing protein 1, chloroplastic (287 aa).

This sequence belongs to the PsbP family. In terms of assembly, partially associated with photosystem I (PSI) complex, but is not a subunit of the complex. Interacts with PsaA and PsaB, but not with PasF.

It localises to the plastid. Its subcellular location is the chloroplast thylakoid lumen. Functionally, photosystem I assembly factor that assists the proper folding and integration of PsaB and PsaA into the thylakoid membrane. The protein is PsbP domain-containing protein 1, chloroplastic (PPD1) of Arabidopsis thaliana (Mouse-ear cress).